Consider the following 101-residue polypeptide: Small ribosomal subunit protein bS18c (101 aa).

Over residues 1–19 (MDKSKRPFRKSKRSFRRRL) the composition is skewed to basic residues. Disordered regions lie at residues 1-23 (MDKSKRPFRKSKRSFRRRLPPIG) and 82-101 (KQFERTESTPRTAGPKTRNK).

This sequence belongs to the bacterial ribosomal protein bS18 family. Part of the 30S ribosomal subunit.

The protein localises to the plastid. It localises to the chloroplast. In Drimys granadensis, this protein is Small ribosomal subunit protein bS18c.